Reading from the N-terminus, the 349-residue chain is tRNA pseudouridine synthase D (349 aa).

Phe27 contributes to the substrate binding site. Catalysis depends on Asp80, which acts as the Nucleophile. Asn129 contacts substrate. The TRUD domain occupies Gly155–Leu303. Phe329 is a substrate binding site.

It belongs to the pseudouridine synthase TruD family.

The enzyme catalyses uridine(13) in tRNA = pseudouridine(13) in tRNA. Its function is as follows. Responsible for synthesis of pseudouridine from uracil-13 in transfer RNAs. This is tRNA pseudouridine synthase D from Shigella boydii serotype 4 (strain Sb227).